A 249-amino-acid polypeptide reads, in one-letter code: Probable transcriptional regulatory protein MXAN_4974 (249 aa).

This sequence belongs to the TACO1 family.

The protein localises to the cytoplasm. The chain is Probable transcriptional regulatory protein MXAN_4974 from Myxococcus xanthus (strain DK1622).